Here is a 416-residue protein sequence, read N- to C-terminus: NADH-quinone oxidoreductase subunit D (416 aa).

Belongs to the complex I 49 kDa subunit family. In terms of assembly, NDH-1 is composed of 14 different subunits. Subunits NuoB, C, D, E, F, and G constitute the peripheral sector of the complex.

The protein localises to the cell inner membrane. The catalysed reaction is a quinone + NADH + 5 H(+)(in) = a quinol + NAD(+) + 4 H(+)(out). Functionally, NDH-1 shuttles electrons from NADH, via FMN and iron-sulfur (Fe-S) centers, to quinones in the respiratory chain. The immediate electron acceptor for the enzyme in this species is believed to be ubiquinone. Couples the redox reaction to proton translocation (for every two electrons transferred, four hydrogen ions are translocated across the cytoplasmic membrane), and thus conserves the redox energy in a proton gradient. The polypeptide is NADH-quinone oxidoreductase subunit D (Gluconacetobacter diazotrophicus (strain ATCC 49037 / DSM 5601 / CCUG 37298 / CIP 103539 / LMG 7603 / PAl5)).